A 357-amino-acid chain; its full sequence is MACLKLQAVTKSYDGKTQIIQPIDLDVADGEFVVMVGPSGCGKSTLLRMVAGLERTTSGDIYIDNQRVTDLEPKDRGIAMVFQNYALYPHMNVFDNMAYSLKIRGFGKTQIRERVEEAARILELMPLLQRKPRELSGGQRQRVAMGRAIVREPAVFLFDEPLSNLDAKLRVQMRLELQQLHQRLKTTSLYVTHDQVEAMTLAQRVIVMNKGIAEQIGAPSDIYRRPASLFVASFIGSPAMNLWAGRISDDGCRFDIGEDIALVLPEPKPQWRGKALTLGVRPEHIQLATRETGGIPLQISTLELLGADNLAHGKWGGQNVIARLSYEHCPAIGSTLWLHLPTSSWHLFDSQSGLRME.

Residues 4–235 enclose the ABC transporter domain; the sequence is LKLQAVTKSY…PASLFVASFI (232 aa). 37 to 44 serves as a coordination point for ATP; it reads GPSGCGKS.

Belongs to the ABC transporter superfamily. sn-glycerol-3-phosphate importer (TC 3.A.1.1.3) family. In terms of assembly, the complex is composed of two ATP-binding proteins (UgpC), two transmembrane proteins (UgpA and UgpE) and a solute-binding protein (UgpB).

The protein localises to the cell inner membrane. It catalyses the reaction sn-glycerol 3-phosphate(out) + ATP + H2O = sn-glycerol 3-phosphate(in) + ADP + phosphate + H(+). Its function is as follows. Part of the ABC transporter complex UgpBAEC involved in sn-glycerol-3-phosphate (G3P) import. Responsible for energy coupling to the transport system. This Pectobacterium atrosepticum (strain SCRI 1043 / ATCC BAA-672) (Erwinia carotovora subsp. atroseptica) protein is sn-glycerol-3-phosphate import ATP-binding protein UgpC.